Consider the following 389-residue polypeptide: Chalcone synthase 4-1 (389 aa).

Cys164 is a catalytic residue.

Belongs to the thiolase-like superfamily. Chalcone/stilbene synthases family.

The catalysed reaction is (E)-4-coumaroyl-CoA + 3 malonyl-CoA + 3 H(+) = 2',4,4',6'-tetrahydroxychalcone + 3 CO2 + 4 CoA. It functions in the pathway secondary metabolite biosynthesis; flavonoid biosynthesis. Its function is as follows. The primary product of this enzyme is 4,2',4',6'-tetrahydroxychalcone (also termed naringenin-chalcone or chalcone) which can under specific conditions spontaneously isomerize into naringenin. This chain is Chalcone synthase 4-1 (CHS4-1), found in Medicago sativa (Alfalfa).